Consider the following 101-residue polypeptide: MGTRFLLALFLVLLVLGFEVQGAPLPQQEESAGPALLTQMRESLSGYWDSAKAAASSLYQKTYLPAVDEKLRDMYSKSTAAVSTYAGIFTDQVLSMLRGEE.

A signal peptide spans 1 to 22 (MGTRFLLALFLVLLVLGFEVQG). The segment at 66–74 (AVDEKLRDM) is lipid binding. Residues 78 to 101 (STAAVSTYAGIFTDQVLSMLRGEE) form a lipoprotein lipase cofactor region.

It belongs to the apolipoprotein C2 family. In terms of processing, proapolipoprotein C-II is synthesized as a sialic acid containing glycoprotein which is subsequently desialylated prior to its proteolytic processing. Proapolipoprotein C-II, the major form found in plasma undergoes proteolytic cleavage of its N-terminal hexapeptide to generate apolipoprotein C-II, which occurs as the minor form in plasma.

It localises to the secreted. Functionally, component of chylomicrons, very low-density lipoproteins (VLDL), low-density lipoproteins (LDL), and high-density lipoproteins (HDL) in plasma. Plays an important role in lipoprotein metabolism as an activator of lipoprotein lipase. Both proapolipoprotein C-II and apolipoprotein C-II can activate lipoprotein lipase. The sequence is that of Apolipoprotein C-II (APOC2) from Saimiri boliviensis boliviensis (Bolivian squirrel monkey).